We begin with the raw amino-acid sequence, 95 residues long: Neurexophilin-3 (95 aa).

2 N-linked (GlcNAc...) asparagine glycosylation sites follow: Asn-1 and Asn-7. The tract at residues 1–21 (NATGQGNISISLVPPSKAVEX) is III. The IV (linker domain) stretch occupies residues 22-30 (HQXQQIFIE). The interval 31–95 (AKASKIFNCR…YIAFYSTDYR (65 aa)) is v (Cys-rich).

Belongs to the neurexophilin family.

The protein resides in the secreted. May be signaling molecules that resemble neuropeptides. Ligand for alpha-neurexins. In Macaca mulatta (Rhesus macaque), this protein is Neurexophilin-3 (NXPH3).